The primary structure comprises 201 residues: Small ribosomal subunit protein uS4c (201 aa).

The disordered stretch occupies residues Gly20–Gln43. Residues Asp31–Ile41 are compositionally biased toward polar residues. The region spanning Met89–Lys157 is the S4 RNA-binding domain.

The protein belongs to the universal ribosomal protein uS4 family. As to quaternary structure, part of the 30S ribosomal subunit. Contacts protein S5. The interaction surface between S4 and S5 is involved in control of translational fidelity.

The protein resides in the plastid. The protein localises to the chloroplast. In terms of biological role, one of the primary rRNA binding proteins, it binds directly to 16S rRNA where it nucleates assembly of the body of the 30S subunit. Functionally, with S5 and S12 plays an important role in translational accuracy. This chain is Small ribosomal subunit protein uS4c (rps4), found in Cycas taitungensis (Prince sago).